The chain runs to 265 residues: Non-structural protein 2a (265 aa).

This sequence belongs to the coronaviruses ns2a protein family.

It localises to the host cytoplasm. Not essential for virus replication in transformed murine cells. This Mus musculus (Mouse) protein is Non-structural protein 2a.